The chain runs to 1256 residues: Muramidase-released protein (1256 aa).

The N-terminal stretch at 1-47 (MRRSNKKSFDWYGTKQQFSIRKYHFGAASVLLGVSLVLGAGAQVVKA) is a signal peptide. Small repeat units lie at residues 663–681 (KTTG…VYEK) and 839–861 (KTDG…VYQK). Disordered stretches follow at residues 873–949 (PETD…VDTP), 967–994 (GNPI…KTVT), and 1028–1049 (KEPV…TDNK). A Large repeat occupies 953 to 1006 (VPVKKVVTNHVDEEGNPIAPQEEGTKPNKSIPGYEFTGKTVTDEDGNTTHIYKK). A compositionally biased stretch (polar residues) spans 1033-1045 (DTPTSPEGTPYDT). The stretch at 1064–1084 (RVDGTENGKVVEGETVVTYVY) is one Small repeat. 2 Large repeats span residues 1089–1142 (TPAK…IYKK) and 1143–1195 (TPAK…IYRK). Residues 1102–1137 (EGNPVAPQEEGTKPNKSIPGYEFTGKTVTDEDGNTT) are disordered. The tract at residues 1196–1229 (LSNKPTTPEKETPAKPQAGKTASGKAQLPNTGEA) is disordered. Positions 1223 to 1227 (LPNTG) match the LPXTG sorting signal motif. A Pentaglycyl murein peptidoglycan amidated threonine modification is found at T1226. A propeptide spans 1227 to 1256 (GEASSVAGALGTAMLVATLAFARKRRRNED) (removed by sortase).

The protein localises to the secreted. Its subcellular location is the cell wall. This is Muramidase-released protein (mrp) from Streptococcus suis.